The chain runs to 269 residues: Tryptophan synthase alpha chain (269 aa).

Active-site proton acceptor residues include glutamate 49 and aspartate 60.

Belongs to the TrpA family. As to quaternary structure, tetramer of two alpha and two beta chains.

The catalysed reaction is (1S,2R)-1-C-(indol-3-yl)glycerol 3-phosphate + L-serine = D-glyceraldehyde 3-phosphate + L-tryptophan + H2O. It functions in the pathway amino-acid biosynthesis; L-tryptophan biosynthesis; L-tryptophan from chorismate: step 5/5. Functionally, the alpha subunit is responsible for the aldol cleavage of indoleglycerol phosphate to indole and glyceraldehyde 3-phosphate. This Actinobacillus pleuropneumoniae serotype 5b (strain L20) protein is Tryptophan synthase alpha chain.